A 578-amino-acid polypeptide reads, in one-letter code: Asparagine synthetase [glutamine-hydrolyzing] 2 (578 aa).

C2 acts as the For GATase activity in catalysis. The region spanning 2–185 is the Glutamine amidotransferase type-2 domain; the sequence is CGILAVLGCI…PGHIYSSKQG (184 aa). L-glutamine is bound by residues 50–54, 75–77, and D98; these read RLAII and NGE. In terms of domain architecture, Asparagine synthetase spans 210–450; it reads LRNAFEKAVI…LPKHILYRQK (241 aa). Residues L231, I267, and 341–342 each bind ATP; that span reads SG.

Expressed in the vascular region adjacent to leaf mesophyll cells in the companion cell-sieve tube element complex.

The catalysed reaction is L-aspartate + L-glutamine + ATP + H2O = L-asparagine + L-glutamate + AMP + diphosphate + H(+). It participates in amino-acid biosynthesis; L-asparagine biosynthesis. Its function is as follows. Essential for nitrogen assimilation, distribution and remobilization within the plant via the phloem. The sequence is that of Asparagine synthetase [glutamine-hydrolyzing] 2 (ASN2) from Arabidopsis thaliana (Mouse-ear cress).